The following is a 226-amino-acid chain: Gap junction beta-2 protein (226 aa).

Residues 1 to 20 (MDWGGLHTILGGVNKHSTSI) are Cytoplasmic-facing. A helical transmembrane segment spans residues 21–40 (GKIWLTVLFIFRIMILVVAA). At 41–75 (KEVWGDEQADFVCNTLQPGCKNVCYDHYFPISHIR) the chain is on the extracellular side. 3 disulfides stabilise this stretch: Cys53–Cys180, Cys60–Cys174, and Cys64–Cys169. Residues 76–98 (LWALQLIFVSTPALLVAMHVAYY) traverse the membrane as a helical segment. Residues 99–131 (RHEKKRKFIRGEIKTEFKDIEEIKKQKVRIEGS) are Cytoplasmic-facing. The chain crosses the membrane as a helical span at residues 132-154 (LWWTYTGSIFFRVIFEAAFMYVF). Over 155-192 (YVMYDGFAMQRLVKCNAWPCPNTVDCFVSRPTEKTVFT) the chain is Extracellular. The helical transmembrane segment at 193-215 (VFMIAVSGICILLNVTELCYLLI) threads the bilayer. The Cytoplasmic portion of the chain corresponds to 216–226 (RFCSGKSKKPV).

It belongs to the connexin family. A connexon is composed of a hexamer of connexins. Interacts with CNST.

It is found in the cell membrane. It localises to the cell junction. Its subcellular location is the gap junction. Its function is as follows. One gap junction consists of a cluster of closely packed pairs of transmembrane channels, the connexons, through which materials of low MW diffuse from one cell to a neighboring cell. In Bos taurus (Bovine), this protein is Gap junction beta-2 protein (GJB2).